The sequence spans 193 residues: Xanthine phosphoribosyltransferase (193 aa).

Leu-20 and Thr-27 together coordinate xanthine. 5-phospho-alpha-D-ribose 1-diphosphate is bound at residue 128 to 132; the sequence is ANGQA. A xanthine-binding site is contributed by Lys-156.

Belongs to the purine/pyrimidine phosphoribosyltransferase family. Xpt subfamily. In terms of assembly, homodimer.

It is found in the cytoplasm. The enzyme catalyses XMP + diphosphate = xanthine + 5-phospho-alpha-D-ribose 1-diphosphate. It participates in purine metabolism; XMP biosynthesis via salvage pathway; XMP from xanthine: step 1/1. Converts the preformed base xanthine, a product of nucleic acid breakdown, to xanthosine 5'-monophosphate (XMP), so it can be reused for RNA or DNA synthesis. In Streptococcus pyogenes serotype M3 (strain ATCC BAA-595 / MGAS315), this protein is Xanthine phosphoribosyltransferase.